We begin with the raw amino-acid sequence, 389 residues long: Indole-3-acetate monooxygenase (389 aa).

Belongs to the HpaH/HsaA monooxygenase family.

It carries out the reaction (indol-3-yl)acetate + NADH + O2 + H(+) = 2-hydroxy-(1H-indol-3-yl)acetate + NAD(+) + H2O. The enzyme catalyses indole + NADH + O2 + H(+) = indoxyl + NAD(+) + H2O. In terms of biological role, involved in the degradation of the plant hormone indole-3-acetic acid (IAA). Catalyzes the first step of the pathway, the conversion of IAA to 2-hydroxy-IAA (2-OH-IAA). Can also convert indole to indoxyl, which spontaneously dimerizes in the presence of oxygen to form the blue pigment indigo. This Acinetobacter baumannii (strain ATCC 19606 / DSM 30007 / JCM 6841 / CCUG 19606 / CIP 70.34 / NBRC 109757 / NCIMB 12457 / NCTC 12156 / 81) protein is Indole-3-acetate monooxygenase.